The following is a 139-amino-acid chain: Small ribosomal subunit protein uS12 (139 aa).

The segment at 12 to 55 is disordered; that stretch reads RVDKVKKSDSPALNKGYNSFKKSQTDVSSPQKRGVCTRVGTMTP. The segment covering 27–42 has biased composition (polar residues); the sequence is GYNSFKKSQTDVSSPQ. A 3-methylthioaspartic acid modification is found at aspartate 102. Residues 119–139 form a disordered region; the sequence is GVQNRMQGRSKYGTKKPKDKK. The span at 130 to 139 shows a compositional bias: basic residues; the sequence is YGTKKPKDKK.

Belongs to the universal ribosomal protein uS12 family. In terms of assembly, part of the 30S ribosomal subunit. Contacts proteins S8 and S17. May interact with IF1 in the 30S initiation complex.

Functionally, with S4 and S5 plays an important role in translational accuracy. Its function is as follows. Interacts with and stabilizes bases of the 16S rRNA that are involved in tRNA selection in the A site and with the mRNA backbone. Located at the interface of the 30S and 50S subunits, it traverses the body of the 30S subunit contacting proteins on the other side and probably holding the rRNA structure together. The combined cluster of proteins S8, S12 and S17 appears to hold together the shoulder and platform of the 30S subunit. The sequence is that of Small ribosomal subunit protein uS12 from Shouchella clausii (strain KSM-K16) (Alkalihalobacillus clausii).